Here is a 99-residue protein sequence, read N- to C-terminus: Large ribosomal subunit protein bL27 (99 aa).

The propeptide occupies 1 to 9 (MLIMNLQLF).

Belongs to the bacterial ribosomal protein bL27 family. In terms of processing, the N-terminus is cleaved by ribosomal processing cysteine protease Prp.

This is Large ribosomal subunit protein bL27 from Clostridium beijerinckii (strain ATCC 51743 / NCIMB 8052) (Clostridium acetobutylicum).